Consider the following 300-residue polypeptide: Cation-efflux pump FieF (300 aa).

4 helical membrane-spanning segments follow: residues 12–32 (AAIAATAMALALLLIKIFAWW), 39–59 (ILAALVDSLVDIAASLTNLLV), 82–102 (AALAQSMFISGSALFLFLTSI), and 114–134 (PGVGIGVTVIALICTIILVTF). Positions 45 and 49 each coordinate Zn(2+). Zn(2+) is bound by residues histidine 153 and aspartate 157. 2 consecutive transmembrane segments (helical) span residues 156–176 (SDVMMNGAILIALGLSWYGWH) and 178–198 (ADALFALGIGIYILYSALRMG).

Belongs to the cation diffusion facilitator (CDF) transporter (TC 2.A.4) family. FieF subfamily. In terms of assembly, homodimer.

Its subcellular location is the cell inner membrane. It carries out the reaction Zn(2+)(in) + H(+)(out) = Zn(2+)(out) + H(+)(in). The enzyme catalyses Cd(2+)(in) + H(+)(out) = Cd(2+)(out) + H(+)(in). The catalysed reaction is Fe(2+)(in) + H(+)(out) = Fe(2+)(out) + H(+)(in). Divalent metal cation transporter which exports Zn(2+), Cd(2+) and possibly Fe(2+). May be involved in zinc and iron detoxification by efflux. The chain is Cation-efflux pump FieF from Salmonella arizonae (strain ATCC BAA-731 / CDC346-86 / RSK2980).